A 1383-amino-acid chain; its full sequence is Periaxin (1383 aa).

Serine 7 is subject to Phosphoserine. The 84-residue stretch at 16 to 99 folds into the PDZ domain; sequence LVEIIVETEA…YKVSFCLKRT (84 aa). Residues 70-84 carry the Nuclear export signal motif; that stretch reads VFFENFKYEDALRLL. Residues serine 133 and serine 243 each carry the phosphoserine modification. Tandem repeats lie at residues 432–436, 440–444, 448–452, 456–460, 461–465, 466–470, 474–478, 482–486, 487–491, 492–496, 497–501, 502–506, 507–511, 515–519, 523–527, 531–535, 536–540, 544–548, 549–553, 554–558, 562–566, 567–571, 575–579, 580–584, 585–589, 593–597, 601–605, 606–610, 611–615, 619–623, 627–631, 632–636, 637–641, 645–649, 653–657, 658–662, 663–667, 671–675, 676–680, 684–688, 689–693, 694–698, 699–703, 705–709, 713–717, and 718–722. The tract at residues 432–722 is 46 X 5 AA approximate tandem repeats of [LVMGIE]-[PSM]-[EDKA]-[LIVMA]-[AQKHPRT]; that may have a tripeptide spacer of [ALKD]-[IPV]-[KPH]; the sequence is GPEVKAPKGP…VPEMKLPKVP (291 aa). Residues serine 838, serine 971, serine 1020, serine 1271, serine 1275, serine 1277, serine 1285, serine 1323, and serine 1329 each carry the phosphoserine modification. Residues 1251–1383 form a disordered region; that stretch reads KVKSPKLRLP…RIEGTQAAAI (133 aa). Over residues 1267–1277 the composition is skewed to low complexity; that stretch reads SESASGEGSPS. Basic and acidic residues predominate over residues 1346–1355; that stretch reads GSKDREEGGF. Serine 1361 carries the post-translational modification Phosphoserine.

This sequence belongs to the periaxin family. In terms of assembly, homodimer (via PDZ domain). Interacts with SCN10A. Found in a complex with SCN10A. Interacts with DRP2. Identified in a dystroglycan complex that contains at least PRX, DRP2, UTRN, DMD and DAG1. Detected in a complex composed of at least EZR, AHNAK, PPL and PRX. Identified in a complex with EZR, AHNAK, BFSP1, BFSP2, ANK2, PLEC, VIM and spectrin. In terms of processing, the N-terminus is blocked. Detected in sciatic nerve and in trigeminal nerve Schwann cells. Detected in myelinating Schwann cells in sciatic nerve (at protein level).

It localises to the nucleus. The protein resides in the cytoplasm. It is found in the cell membrane. Its subcellular location is the cell junction. Scaffolding protein that functions as part of a dystroglycan complex in Schwann cells, and as part of EZR and AHNAK-containing complexes in eye lens fiber cells. Required for the maintenance of the peripheral myelin sheath that is essential for normal transmission of nerve impulses and normal perception of sensory stimuli. Required for normal transport of MBP mRNA from the perinuclear to the paranodal regions. Required for normal remyelination after nerve injury. Required for normal elongation of Schwann cells and normal length of the internodes between the nodes of Ranvier. The demyelinated nodes of Ranvier permit saltatory transmission of nerve impulses; shorter internodes cause slower transmission of nerve impulses. Required for the formation of appositions between the abaxonal surface of the myelin sheath and the Schwann cell plasma membrane; the Schwann cell cytoplasm is restricted to regions between these appositions. Required for the formation of Cajal bands and of Schmidt-Lanterman incisures that correspond to short, cytoplasm-filled regions on myelinated nerves. Recruits DRP2 to the Schwann cell plasma membrane. Required for normal protein composition of the eye lens fiber cell plasma membrane and normal eye lens fiber cell morphology. This Rattus norvegicus (Rat) protein is Periaxin (Prx).